The primary structure comprises 464 residues: Mannose-1-phosphate guanylyltransferase (464 aa).

It belongs to the mannose-6-phosphate isomerase type 2 family.

It catalyses the reaction alpha-D-mannose 1-phosphate + GTP + H(+) = GDP-alpha-D-mannose + diphosphate. Its pathway is nucleotide-sugar biosynthesis; GDP-alpha-D-mannose biosynthesis; GDP-alpha-D-mannose from alpha-D-mannose 1-phosphate (GTP route): step 1/1. It functions in the pathway bacterial outer membrane biogenesis; LPS O-antigen biosynthesis. Functionally, involved in GDP-mannose biosynthesis which serves as the activated sugar nucleotide precursor for mannose residues in cell surface polysaccharides. This enzyme participates in synthesis of the LPS O7 antigen. The protein is Mannose-1-phosphate guanylyltransferase (manC) of Escherichia coli.